A 73-amino-acid chain; its full sequence is MDGLETTSKIKKKGWTVRHGEKGTENRLGPILVNHLCCYKKSKFTMTKQNVTASACCYRKASHYDKAKCNRKC.

This is an uncharacterized protein from Caprine arthritis encephalitis virus (CAEV).